A 490-amino-acid polypeptide reads, in one-letter code: ATP synthase subunit beta (490 aa).

173 to 180 (GGAGVGKT) is an ATP binding site.

The protein belongs to the ATPase alpha/beta chains family. As to quaternary structure, F-type ATPases have 2 components, CF(1) - the catalytic core - and CF(0) - the membrane proton channel. CF(1) has five subunits: alpha(3), beta(3), gamma(1), delta(1), epsilon(1). CF(0) has three main subunits: a(1), b(2) and c(9-12). The alpha and beta chains form an alternating ring which encloses part of the gamma chain. CF(1) is attached to CF(0) by a central stalk formed by the gamma and epsilon chains, while a peripheral stalk is formed by the delta and b chains.

Its subcellular location is the cell membrane. It catalyses the reaction ATP + H2O + 4 H(+)(in) = ADP + phosphate + 5 H(+)(out). Its function is as follows. Produces ATP from ADP in the presence of a proton gradient across the membrane. The catalytic sites are hosted primarily by the beta subunits. The chain is ATP synthase subunit beta from Bifidobacterium longum subsp. infantis (strain ATCC 15697 / DSM 20088 / JCM 1222 / NCTC 11817 / S12).